A 293-amino-acid chain; its full sequence is Elongation factor Ts (293 aa).

The tract at residues 80–83 is involved in Mg(2+) ion dislocation from EF-Tu; it reads TDFV.

It belongs to the EF-Ts family.

It localises to the cytoplasm. In terms of biological role, associates with the EF-Tu.GDP complex and induces the exchange of GDP to GTP. It remains bound to the aminoacyl-tRNA.EF-Tu.GTP complex up to the GTP hydrolysis stage on the ribosome. This Staphylococcus aureus (strain Mu3 / ATCC 700698) protein is Elongation factor Ts.